Consider the following 243-residue polypeptide: Ribosomal RNA small subunit methyltransferase J (243 aa).

Residues Glu112–Arg113 and Asp164 contribute to the S-adenosyl-L-methionine site.

Belongs to the methyltransferase superfamily. RsmJ family.

The protein resides in the cytoplasm. The catalysed reaction is guanosine(1516) in 16S rRNA + S-adenosyl-L-methionine = N(2)-methylguanosine(1516) in 16S rRNA + S-adenosyl-L-homocysteine + H(+). In terms of biological role, specifically methylates the guanosine in position 1516 of 16S rRNA. In Legionella pneumophila (strain Corby), this protein is Ribosomal RNA small subunit methyltransferase J.